The primary structure comprises 503 residues: Cytochrome P450 3A29 (503 aa).

C442 provides a ligand contact to heme.

This sequence belongs to the cytochrome P450 family. The cofactor is heme.

The protein localises to the endoplasmic reticulum membrane. It is found in the microsome membrane. The catalysed reaction is an organic molecule + reduced [NADPH--hemoprotein reductase] + O2 = an alcohol + oxidized [NADPH--hemoprotein reductase] + H2O + H(+). Cytochromes P450 are a group of heme-thiolate monooxygenases. In liver microsomes, this enzyme is involved in an NADPH-dependent electron transport pathway. It oxidizes a variety of structurally unrelated compounds, including steroids, fatty acids, and xenobiotics. This chain is Cytochrome P450 3A29 (CYP3A29), found in Sus scrofa (Pig).